Reading from the N-terminus, the 290-residue chain is 33 kDa chaperonin (290 aa).

2 disulfides stabilise this stretch: Cys235–Cys237 and Cys268–Cys271.

The protein belongs to the HSP33 family. In terms of processing, under oxidizing conditions two disulfide bonds are formed involving the reactive cysteines. Under reducing conditions zinc is bound to the reactive cysteines and the protein is inactive.

The protein resides in the cytoplasm. In terms of biological role, redox regulated molecular chaperone. Protects both thermally unfolding and oxidatively damaged proteins from irreversible aggregation. Plays an important role in the bacterial defense system toward oxidative stress. This chain is 33 kDa chaperonin, found in Streptococcus pyogenes serotype M5 (strain Manfredo).